We begin with the raw amino-acid sequence, 527 residues long: Optineurin (527 aa).

Disordered stretches follow at residues 1–32 (MSHQ…HPNL) and 101–143 (SHEN…KDQL). The stretch at 38 to 170 (EELLQQMKEL…VSELQLKLNS (133 aa)) forms a coiled coil. The interval 58–209 (MKLNNQAMKG…GPTRTVSTSR (152 aa)) is interaction with Rab8. Residues 176-181 (DSFVEI) carry the LIR motif. Ser177 is modified (phosphoserine; by TBK1). Over residues 186–197 (GEAEGSVKEIKH) the composition is skewed to basic and acidic residues. 2 disordered regions span residues 186–214 (GEAE…LSKY) and 262–292 (SDFE…EKGL). Residue Ser198 is modified to Phosphoserine. The segment covering 201–210 (PTRTVSTSRA) has biased composition (polar residues). A coiled-coil region spans residues 239–458 (CLREGNQKVE…LLKENDAFED (220 aa)). Composition is skewed to basic and acidic residues over residues 262–274 (SDFE…RSEI) and 281–292 (STEKENDEEKGL). Residues 361–527 (TRKESEKVDR…LQIHVMDCII (167 aa)) form an interaction with HD region. The tract at residues 362 to 470 (RKESEKVDRA…RQSLMEMQSR (109 aa)) is interaction with MYO6. Positions 424-429 (DFHAER) match the UBAN motif. Ser476 bears the Phosphoserine mark. Residues 497-527 (QRNIPIHSCPKCGEVLPDIDTLQIHVMDCII) form a CCHC NOA-type zinc finger. Positions 505, 508, 521, and 525 each coordinate Zn(2+).

As to quaternary structure, self-associates. Interacts with HD. Interacts with GTF3A. Interacts with MYO6. Interacts (via UBAN) with ubiquitinated TFRC. Interacts with GTP-bound Rab8 (RAB8A and/or RAB8B). Interacts with TBC1D17. Interacts with TBK1. Interacts with TRAF3. Binds to linear ubiquitin chains. Interacts with LC3 family members MAP1LC3A, MAP1LC3B, GABARAP, GABARAPL1 and GABARAPL2; OPTN phosphorylation increases the association (at least with MAP1LC3B). Interacts with RAB12; the interaction may be indirect. Interacts with TBK1; this interaction leads to the Golgi localization of TBK1 and its subsequent activation. Interacts with palmitoyltransferase ZDHHC17/HIP14; the interaction does not lead to palmitoylation of OPTN. Interacts with CYLD. Interacts with TOM1; the interaction is indirect and is mediated by MYO6, which acts as a bridge between TOM1 and OPTN. Interacts with USP12; the interaction is independent of USP12 deubiquitinase activity and may be involved in regulation of autophagic flux. Phosphorylated by TBK1, leading to restrict bacterial proliferation in case of infection.

The protein resides in the cytoplasm. It localises to the perinuclear region. The protein localises to the golgi apparatus. It is found in the trans-Golgi network. Its subcellular location is the cytoplasmic vesicle. The protein resides in the autophagosome. It localises to the recycling endosome. In terms of biological role, plays an important role in the maintenance of the Golgi complex, in membrane trafficking, in exocytosis, through its interaction with myosin VI and Rab8. Links myosin VI to the Golgi complex and plays an important role in Golgi ribbon formation. Negatively regulates the induction of IFNB in response to RNA virus infection. Plays a neuroprotective role in the eye and optic nerve. Probably part of the TNF-alpha signaling pathway that can shift the equilibrium toward induction of cell death. May act by regulating membrane trafficking and cellular morphogenesis via a complex that contains Rab8 and huntingtin (HD). Mediates the interaction of Rab8 with the probable GTPase-activating protein TBC1D17 during Rab8-mediated endocytic trafficking, such as that of transferrin receptor (TFRC/TfR); regulates Rab8 recruitment to tubules emanating from the endocytic recycling compartment. Autophagy receptor that interacts directly with both the cargo to become degraded and an autophagy modifier of the MAP1 LC3 family; targets ubiquitin-coated bacteria (xenophagy) and appears to function in the same pathway as SQSTM1 and CALCOCO2/NDP52. The polypeptide is Optineurin (OPTN) (Pongo abelii (Sumatran orangutan)).